A 595-amino-acid chain; its full sequence is Solute carrier family 13 member 1 (595 aa).

Helical transmembrane passes span 13-33 (FLFV…LHTK), 41-61 (LFVV…TALL), 77-97 (VASA…CLAT), 108-128 (IALK…LGFM), and 131-151 (TAFL…MPIA). Residues N174 and N207 are each glycosylated (N-linked (GlcNAc...) asparagine). 8 consecutive transmembrane segments (helical) span residues 239–259 (LTCL…ITGT), 290–310 (PAAL…FLGF), 348–368 (IVTL…DPGF), 381–401 (GFAT…LIPA), 464–484 (PLGS…VTSL), 491–511 (PATI…IHVN), 512–532 (PLYI…LPVA), and 554–574 (GLGV…TWIV). The N-linked (GlcNAc...) asparagine glycan is linked to N591.

Belongs to the SLC13A/DASS transporter (TC 2.A.47) family. NADC subfamily. In terms of tissue distribution, highly expressed in kidney; not detectable in the other tissues tested.

Its subcellular location is the apical cell membrane. The catalysed reaction is sulfate(out) + 3 Na(+)(out) = sulfate(in) + 3 Na(+)(in). It carries out the reaction selenate(out) + 3 Na(+)(out) = selenate(in) + 3 Na(+)(in). The enzyme catalyses thiosulfate(out) + 3 Na(+)(out) = thiosulfate(in) + 3 Na(+)(in). With respect to regulation, inhibited by thiosulfate, selenate, molybdate, tungstate, citrate and succinate. Functionally, sodium:sulfate symporter that mediates sulfate reabsorption in the kidney and small intestine. Can also mediate the transport of selenate and thiosulfate. The sequence is that of Solute carrier family 13 member 1 (SLC13A1) from Homo sapiens (Human).